Reading from the N-terminus, the 245-residue chain is 1-(5-phosphoribosyl)-5-[(5-phosphoribosylamino)methylideneamino] imidazole-4-carboxamide isomerase (245 aa).

The active-site Proton acceptor is aspartate 7. The active-site Proton donor is aspartate 129.

The protein belongs to the HisA/HisF family.

It localises to the cytoplasm. The enzyme catalyses 1-(5-phospho-beta-D-ribosyl)-5-[(5-phospho-beta-D-ribosylamino)methylideneamino]imidazole-4-carboxamide = 5-[(5-phospho-1-deoxy-D-ribulos-1-ylimino)methylamino]-1-(5-phospho-beta-D-ribosyl)imidazole-4-carboxamide. It participates in amino-acid biosynthesis; L-histidine biosynthesis; L-histidine from 5-phospho-alpha-D-ribose 1-diphosphate: step 4/9. This Buchnera aphidicola subsp. Cinara cedri (strain Cc) protein is 1-(5-phosphoribosyl)-5-[(5-phosphoribosylamino)methylideneamino] imidazole-4-carboxamide isomerase.